Here is a 368-residue protein sequence, read N- to C-terminus: H-2 class I histocompatibility antigen, D-P alpha chain (368 aa).

A signal peptide spans 1-21 (MAPRTLLLLLAAALAPTQTRA). Residues 22–111 (GPHSLRYFVT…LLGYYNQSKG (90 aa)) form an alpha-1 region. Residues 22 to 303 (GPHSLRYFVT…RWEPPPSTDS (282 aa)) lie on the Extracellular side of the membrane. Residue Asn107 is glycosylated (N-linked (GlcNAc...) asparagine). Residues 112-203 (GSHTIQGMRG…ELGNATLLCT (92 aa)) form an alpha-2 region. The cysteines at positions 122 and 185 are disulfide-linked. N-linked (GlcNAc...) asparagine glycans are attached at residues Asn197 and Asn277. Residues 204 to 295 (DPPKAHVTHH…GLPEPLTLRW (92 aa)) form an alpha-3 region. The Ig-like C1-type domain occupies 206–294 (PKAHVTHHPR…EGLPEPLTLR (89 aa)). Cys224 and Cys280 form a disulfide bridge. The connecting peptide stretch occupies residues 296 to 303 (EPPPSTDS). A helical transmembrane segment spans residues 304–330 (YMVIVAVLVVLGAVFIIGAVVAFVMMM). The Cytoplasmic portion of the chain corresponds to 331–368 (RRNTGGKGGDYTLAPGSQSSEMSLRDCKVMVHDSHSLA). Phosphoserine is present on residues Ser350 and Ser353.

This sequence belongs to the MHC class I family. As to quaternary structure, heterodimer of an alpha chain and a beta chain (beta-2-microglobulin).

It is found in the membrane. Functionally, involved in the presentation of foreign antigens to the immune system. This chain is H-2 class I histocompatibility antigen, D-P alpha chain (H2-D1), found in Mus musculus (Mouse).